A 290-amino-acid chain; its full sequence is Phosphatidylglycerol--prolipoprotein diacylglyceryl transferase (290 aa).

7 helical membrane passes run 21 to 41, 60 to 80, 96 to 116, 130 to 150, 198 to 218, 225 to 245, and 258 to 278; these read VSLH…MWLA, LLYA…VLFY, WDGG…MFWF, FIAP…FING, SQLY…NLFI, GAVS…VEAF, and VISM…IMMI. Residue Arg143 participates in a 1,2-diacyl-sn-glycero-3-phospho-(1'-sn-glycerol) binding.

It belongs to the Lgt family.

Its subcellular location is the cell inner membrane. It catalyses the reaction L-cysteinyl-[prolipoprotein] + a 1,2-diacyl-sn-glycero-3-phospho-(1'-sn-glycerol) = an S-1,2-diacyl-sn-glyceryl-L-cysteinyl-[prolipoprotein] + sn-glycerol 1-phosphate + H(+). Its pathway is protein modification; lipoprotein biosynthesis (diacylglyceryl transfer). Functionally, catalyzes the transfer of the diacylglyceryl group from phosphatidylglycerol to the sulfhydryl group of the N-terminal cysteine of a prolipoprotein, the first step in the formation of mature lipoproteins. In Serratia proteamaculans (strain 568), this protein is Phosphatidylglycerol--prolipoprotein diacylglyceryl transferase.